A 1014-amino-acid chain; its full sequence is Disease resistance protein RGA4 (1014 aa).

The interval 1–182 is structured coiled coil (CC) domain; sequence MEAALLSGFI…PRIHEADLVG (182 aa). Positions 105–145 form a coiled coil; that stretch reads RTVRATKKLLQTNQHLAQELQRLKRMVEEANQRKQRYTAAA. One can recognise an NB-ARC domain in the interval 189 to 466; sequence ELLEQLAERQ…WLAEGFVEPV (278 aa). LRR repeat units follow at residues 484–506, 507–530, 531–552, 580–602, 603–624, 625–647, 701–725, 762–784, 785–807, 808–833, and 854–877; these read RNII…TYGM, MREF…DKFL, PKYV…NFNG, LRVL…ICNL, VLLK…IAKL, KDLE…VFGL, MNKL…DLRE, PCYL…VTSL, RGLK…ALSN, LSYL…GFPR, and LPFL…KIEC.

This sequence belongs to the disease resistance NB-LRR family. Expressed in leaves.

In terms of biological role, probable disease resistance protein. Resistance proteins guard the plant against pathogens that contain an appropriate avirulence protein via an indirect interaction with this avirulence protein. That triggers a defense system including the hypersensitive response, which restricts the pathogen growth. At the opposite of cultivars Aichi asahi and Sasanishiki, the cultivars Nipponbare, Mokoto and Hitomebore don't recognize the effector avirulence protein AVR-Pia from M.oryzae. This is Disease resistance protein RGA4 from Oryza sativa subsp. japonica (Rice).